Consider the following 298-residue polypeptide: Mimecan (298 aa).

The signal sequence occupies residues 1 to 19 (METVHSTFLLLLFVPLTQQ). Asn-88 is a glycosylation site (N-linked (GlcNAc...) (keratan sulfate) asparagine). LRR repeat units follow at residues 112 to 131 (DAVP…FNKI), 132 to 155 (KKLT…GNLI), 156 to 179 (EDIE…ENQL), 180 to 199 (LRLP…HNKI), 200 to 225 (KSKG…HNDL), 226 to 246 (ESVP…FNSI), and 247 to 277 (SSLT…GNPI). Residues Cys-255 and Cys-288 are joined by a disulfide bond. N-linked (GlcNAc...) (keratan sulfate) asparagine glycosylation is present at Asn-258.

It belongs to the small leucine-rich proteoglycan (SLRP) family. SLRP class III subfamily. Post-translationally, contains keratan sulfate.

The protein resides in the secreted. Its subcellular location is the extracellular space. It is found in the extracellular matrix. Functionally, induces bone formation in conjunction with TGF-beta-1 or TGF-beta-2. This Mus musculus (Mouse) protein is Mimecan (Ogn).